Reading from the N-terminus, the 185-residue chain is Ribosome-recycling factor (185 aa).

This sequence belongs to the RRF family.

It localises to the cytoplasm. Functionally, responsible for the release of ribosomes from messenger RNA at the termination of protein biosynthesis. May increase the efficiency of translation by recycling ribosomes from one round of translation to another. This is Ribosome-recycling factor from Desulforapulum autotrophicum (strain ATCC 43914 / DSM 3382 / VKM B-1955 / HRM2) (Desulfobacterium autotrophicum).